Reading from the N-terminus, the 174-residue chain is RNA pyrophosphohydrolase (174 aa).

The region spanning 6 to 149 is the Nudix hydrolase domain; it reads GYRPNVGIVI…KRDVYRRALK (144 aa). The short motif at 38-59 is the Nudix box element; that stretch reads GGIDEGETPEQAMYRELYEEVG.

This sequence belongs to the Nudix hydrolase family. RppH subfamily. A divalent metal cation is required as a cofactor.

Functionally, accelerates the degradation of transcripts by removing pyrophosphate from the 5'-end of triphosphorylated RNA, leading to a more labile monophosphorylated state that can stimulate subsequent ribonuclease cleavage. In Photobacterium profundum (strain SS9), this protein is RNA pyrophosphohydrolase.